Here is a 221-residue protein sequence, read N- to C-terminus: NEDD4 family-interacting protein 1 (221 aa).

Residue Ala2 is modified to N-acetylalanine. Residues 2-41 (ALALAALAAVEPACGSRYQQLQNEEESGEPEQAAGDAPPP) are interaction with UBE2L3. The Cytoplasmic segment spans residues 2–116 (ALALAALAAV…ADQLRIGNDG (115 aa)). The tract at residues 18 to 45 (RYQQLQNEEESGEPEQAAGDAPPPYSSI) is disordered. 3 short sequence motifs (PPxY motif) span residues 39 to 42 (PPPY), 64 to 67 (PPSY), and 74 to 76 (PSY). The tract at residues 42–76 (YSSISAESAAYFDYKDESGFPKPPSYNVATTLPSY) is interaction with ITCH. A helical transmembrane segment spans residues 117 to 137 (IFMLTFFMAFLFNWIGFFLSF). Residues 138–143 (CLTTSA) lie on the Extracellular side of the membrane. Residues 144-164 (AGRYGAISGFGLSLIKWILIV) traverse the membrane as a helical segment. The Cytoplasmic segment spans residues 165-172 (RFSTYFPG). The helical transmembrane segment at 173–193 (YFDGQYWLWWVFLVLGFLLFL) threads the bilayer. At 194 to 221 (RGFINYAKVRKMPETFSNLPRTRVLFIY) the chain is on the extracellular side.

Forms heterodimers with NDFIP2. Interacts with several E3 ubiquitin-protein ligases, including ITCH, NEDD4, NEDD4L and WWP2. The interaction with NEDD4, NEDD4L and ITCH leads to relocalization of these proteins to exosomes and eventually to exosomal secretion. Interacts with U2SURP. Interacts with SLC11A2/DMT1. Interacts with PTEN. May interact with phosphorylated EGFR. Interacts with BRAT1. Interacts with KCNH2. Interacts with MAVS. Part of a complex containing ITCH, NDFIP1 and MAP3K7. Interacts (via N-terminus) with UBE2L3; the interaction mediates recruitment of UBE2L3 to ITCH. In terms of processing, ubiquitinated by NEDD4 and ITCH; mono-, di- and polyubiquitinated forms are detected. Ubiquitination regulates its degradation. Undergoes transient tyrosine phosphorylation following EGF stimulation, most probably by catalyzed by SRC. Phosphorylation SRC is enhanced in the presence of NDFIP2 which may act as a scaffold to recruit SRC to NDFIP1. Widely expressed. Higher levels are detected in cerebellum, pituitary, thalamus, kidney, liver, testis, salivary glands and placenta. Also expressed in fetal brain, kidney and lung.

The protein resides in the endosome membrane. Its subcellular location is the golgi apparatus membrane. The protein localises to the synapse. It localises to the synaptosome. It is found in the cell projection. The protein resides in the dendrite. Its subcellular location is the secreted. Activates HECT domain-containing E3 ubiquitin-protein ligases, including NEDD4 and ITCH, and consequently modulates the stability of their targets. As a result, controls many cellular processes. Prevents chronic T-helper cell-mediated inflammation by activating ITCH and thus controlling JUNB degradation. Promotes pancreatic beta cell death through degradation of JUNB and inhibition of the unfolded protein response, leading to reduction of insulin secretion. Restricts the production of pro-inflammatory cytokines in effector Th17 T-cells by promoting ITCH-mediated ubiquitination and degradation of RORC. Together with NDFIP2, limits the cytokine signaling and expansion of effector Th2 T-cells by promoting degradation of JAK1, probably by ITCH- and NEDD4L-mediated ubiquitination. Regulates peripheral T-cell tolerance to self and foreign antigens, forcing the exit of naive CD4+ T-cells from the cell cycle before they become effector T-cells. Negatively regulates RLR-mediated antiviral response by promoting SMURF1-mediated ubiquitination and subsequent degradation of MAVS. Negatively regulates KCNH2 potassium channel activity by decreasing its cell-surface expression and interfering with channel maturation through recruitment of NEDD4L to the Golgi apparatus where it mediates KCNH2 degradation. In cortical neurons, mediates the ubiquitination of the divalent metal transporter SLC11A2/DMT1 by NEDD4L, leading to its down-regulation and protection of the cells from cobalt and iron toxicity. Important for normal development of dendrites and dendritic spines in cortex. Enhances the ubiquitination of BRAT1 mediated by: NEDD4, NEDD4L and ITCH and is required for the nuclear localization of ubiquitinated BRAT1. Enhances the ITCH-mediated ubiquitination of MAP3K7 by recruiting E2 ubiquitin-conjugating enzyme UBE2L3 to ITCH. Modulates EGFR signaling through multiple pathways. In particular, may regulate the ratio of AKT1-to-MAPK8 signaling in response to EGF, acting on AKT1 probably through PTEN destabilization and on MAPK8 through ITCH-dependent MAP2K4 inactivation. As a result, may control cell growth rate. Inhibits cell proliferation by promoting PTEN nuclear localization and changing its signaling specificity. The polypeptide is NEDD4 family-interacting protein 1 (NDFIP1) (Homo sapiens (Human)).